Here is a 218-residue protein sequence, read N- to C-terminus: Ribonuclease T (218 aa).

An Exonuclease domain is found at 24–198 (VIIDVETAGF…YDAERTAELF (175 aa)). Residues D27, E29, H185, and D190 each coordinate Mg(2+). H185 acts as the Proton donor/acceptor in catalysis.

It belongs to the RNase T family. As to quaternary structure, homodimer. Mg(2+) is required as a cofactor.

Trims short 3' overhangs of a variety of RNA species, leaving a one or two nucleotide 3' overhang. Responsible for the end-turnover of tRNA: specifically removes the terminal AMP residue from uncharged tRNA (tRNA-C-C-A). Also appears to be involved in tRNA biosynthesis. The protein is Ribonuclease T of Histophilus somni (strain 129Pt) (Haemophilus somnus).